The chain runs to 522 residues: Sorting nexin-1 (522 aa).

2 disordered regions span residues 1–84 (MASG…QDQE) and 115–142 (SLPPQEATNSSKPQPTYEELEEEEQEDQ). S32 and S39 each carry phosphoserine. Over residues 35–45 (EAGDSDTEGED) the composition is skewed to acidic residues. T41 and T48 each carry phosphothreonine. Polar residues predominate over residues 55–73 (KHQSPKITTSLLPINNGSK). Phosphoserine is present on residues S58 and S72. A compositionally biased stretch (acidic residues) spans 132 to 142 (EELEEEEQEDQ). Positions 143 to 272 (FDLTVGITDP…EFLEKEELPR (130 aa)) constitute a PX domain. A 1,2-diacyl-sn-glycero-3-phospho-(1D-myo-inositol-3-phosphate)-binding residues include R186, S188, and K214. At S188 the chain carries Phosphoserine. K237 carries the N6-acetyllysine modification. R238 serves as a coordination point for a 1,2-diacyl-sn-glycero-3-phospho-(1D-myo-inositol-3-phosphate). S280 bears the Phosphoserine mark. The tract at residues 281-298 (GAGLLKMFNKATDAVSKM) is membrane-binding amphipathic helix. Positions 302 to 522 (MNESDIWFEE…AFLPEAKAIS (221 aa)) constitute a BAR domain.

This sequence belongs to the sorting nexin family. Predominantly forms heterodimers with BAR domain-containing sorting nexins SNX5, SNX6 and SNX32; can self-associate to form homodimers. The heterodimers are proposed to self-assemble into helical arrays on the membrane to stabilize and expand local membrane curvature underlying endosomal tubule formation. Thought to be a component of the originally described retromer complex (also called SNX-BAR retromer) which is a pentamer containing the heterotrimeric retromer cargo-selective complex (CSC), also described as vacuolar protein sorting subcomplex (VPS) and a heterodimeric membrane-deforming subcomplex formed between SNX1 or SNX2 and SNX5 or SNX6 (also called SNX-BAR subcomplex); the respective CSC and SNX-BAR subcomplexes associate with low affinity. Interacts with SNX5, SNX6, SNX32, VPS26A, VPS29, VPS35, DRD5, DENND5A, KALRN, RHOG (GDP-bound form). The interaction with SNX2 is reported controversially. Interacts with DNAJC13; prevented by presence of HGS. Interacts with HGS.

It is found in the endosome membrane. It localises to the golgi apparatus. The protein localises to the trans-Golgi network membrane. The protein resides in the early endosome membrane. Its subcellular location is the cell projection. It is found in the lamellipodium. In terms of biological role, involved in several stages of intracellular trafficking. Interacts with membranes containing phosphatidylinositol 3-phosphate (PtdIns(3P)) or phosphatidylinositol 3,5-bisphosphate (PtdIns(3,5)P2). Acts in part as component of the retromer membrane-deforming SNX-BAR subcomplex. The SNX-BAR retromer mediates retrograde transport of cargo proteins from endosomes to the trans-Golgi network (TGN) and is involved in endosome-to-plasma membrane transport for cargo protein recycling. The SNX-BAR subcomplex functions to deform the donor membrane into a tubular profile called endosome-to-TGN transport carrier (ETC). Can sense membrane curvature and has in vitro vesicle-to-membrane remodeling activity. Involved in retrograde endosome-to-TGN transport of lysosomal enzyme receptors (IGF2R, M6PR and SORT1) and Shiginella dysenteria toxin stxB. Plays a role in targeting ligand-activated EGFR to the lysosomes for degradation after endocytosis from the cell surface and release from the Golgi. Involvement in retromer-independent endocytic trafficking of P2RY1 and lysosomal degradation of protease-activated receptor-1/F2R. Promotes KALRN- and RHOG-dependent but retromer-independent membrane remodeling such as lamellipodium formation; the function is dependent on GEF activity of KALRN. Required for endocytosis of DRD5 upon agonist stimulation but not for basal receptor trafficking. The polypeptide is Sorting nexin-1 (SNX1) (Homo sapiens (Human)).